The sequence spans 448 residues: N-succinylarginine dihydrolase (448 aa).

Substrate-binding positions include 19 to 28, N110, and 137 to 138; these read GGLSYGNVAS and HR. E174 is a catalytic residue. R214 contributes to the substrate binding site. Residue H250 is part of the active site. Residues D252 and N365 each coordinate substrate. Residue C371 is the Nucleophile of the active site.

The protein belongs to the succinylarginine dihydrolase family. As to quaternary structure, homodimer.

It catalyses the reaction N(2)-succinyl-L-arginine + 2 H2O + 2 H(+) = N(2)-succinyl-L-ornithine + 2 NH4(+) + CO2. It functions in the pathway amino-acid degradation; L-arginine degradation via AST pathway; L-glutamate and succinate from L-arginine: step 2/5. In terms of biological role, catalyzes the hydrolysis of N(2)-succinylarginine into N(2)-succinylornithine, ammonia and CO(2). The sequence is that of N-succinylarginine dihydrolase from Pseudomonas savastanoi pv. phaseolicola (strain 1448A / Race 6) (Pseudomonas syringae pv. phaseolicola (strain 1448A / Race 6)).